Here is a 1068-residue protein sequence, read N- to C-terminus: Rho family-interacting cell polarization regulator 2 (1068 aa).

Phosphoserine; in isoform occurs at positions 21 and 37. Residues 45–73 form a disordered region; it reads LKKPQAKLKKMHNLGHKNNNPPKEPQPKR. The span at 48–59 shows a compositional bias: basic residues; the sequence is PQAKLKKMHNLG. The tract at residues 55-113 is involved in cell filopodia formation; the sequence is MHNLGHKNNNPPKEPQPKRVEEVYRALKNGLDEYLEVHQTELDKLTAQLKDMKRNSRLG. Residues 83–112 are a coiled coil; it reads NGLDEYLEVHQTELDKLTAQLKDMKRNSRL. Ser341 carries the phosphoserine; in isoform 2 modification. The span at 474–491 shows a compositional bias: polar residues; that stretch reads QNEGMDDTSSASSRNSLG. Residues 474–524 form a disordered region; the sequence is QNEGMDDTSSASSRNSLGEGQEPKSHLKEEDPEEPRKPASAPSEACRRQSS. Positions 494–510 are enriched in basic and acidic residues; sequence QEPKSHLKEEDPEEPRK. Ser523 bears the Phosphoserine; in isoform 2 mark. Ser573 carries the phosphoserine modification. Ser585 carries the post-translational modification Phosphoserine; in isoform 2. Positions 768 to 793 form a coiled coil; that stretch reads VARSLLEKLSRQIQVMEKLAAVSDEN.

This sequence belongs to the RIPOR family. Homooligomer; homooligomerization is regulated by RHOC and leads to the formation of concatemers through the association of N- and C-termini. Interacts with 14-3-3 proteins; these interactions occur during myogenic cell differentiation. Interacts with HDAC6; this interaction occurs during early myogenic differentiation and prevents HDAC6 to deacetylate tubulin. Interacts with DYSF; this interaction occurs during early myogenic differentiation. Interacts with MYOF. Interacts with RHOC. Isoform 1 and isoform 2 interact (via active GTP- or inactive GDP-bound forms) with RHOA; these interactions are direct, block the loading of GTP to RHOA and decrease upon chemokine CCL19 stimulation in primary T lymphocytes. Isoform 2 interacts (phosphorylated form) with HDAC6; this interaction induces T cell proliferation arrest. Isoform 2 interacts (phosphorylated form) with 14-3-3 proteins; these interactions induces T cell proliferation arrest. Isoform 2 interacts with 14-3-3 proteins. Isoform 2 interacts (via phosphorylated form) with YWHAB; this interaction occurs in a chemokine-dependent manner and does not compete for binding of RIPOR2 with RHOA nor blocks inhibition of RIPOR2-mediated RHOA activity. Isoform 2 interacts with YWHAE. Isoform 2 interacts with YWHAQ. Post-translationally, phosphorylated. Isoform 2 is phosphorylated in T cells. Chemokine-induced phosphorylation of isoform 2 in neutrophils occurs in a PKC- and AKT-dependent manner, resulting in RIPOR2 interaction with YWHAB and stabilization. Isoform 2 is phosphorylated by PKCA, AKT1 and MAPKAPK1A; in vitro. In terms of processing, acetylated during myogenic differentiation. As to expression, expressed in primary fetal mononuclear myoblast. Expressed strongly in naive T lymphocytes. Expressed weakly in activated T lymphocytes (at protein level). Expressed in blood cells and adult tissues of hematopoietic origin, such as the secondary lymphoid organs. Expressed in cytotrophoblast.

It is found in the cytoplasm. Its subcellular location is the cytoskeleton. The protein localises to the cell projection. It localises to the filopodium. The protein resides in the stereocilium. It is found in the stereocilium membrane. Its subcellular location is the apical cell membrane. Acts as an inhibitor of the small GTPase RHOA and plays several roles in the regulation of myoblast and hair cell differentiation, lymphocyte T proliferation and neutrophil polarization. Inhibits chemokine-induced T lymphocyte responses, such as cell adhesion, polarization and migration. Involved also in the regulation of neutrophil polarization, chemotaxis and adhesion. Required for normal development of inner and outer hair cell stereocilia within the cochlea of the inner ear. Plays a role for maintaining the structural organization of the basal domain of stereocilia. Involved in mechanosensory hair cell function. Required for normal hearing. In terms of biological role, acts as an inhibitor of the small GTPase RHOA. Plays a role in fetal mononuclear myoblast differentiation by promoting filopodia and myotube formation. Maintains naive T lymphocytes in a quiescent state. The sequence is that of Rho family-interacting cell polarization regulator 2 (RIPOR2) from Homo sapiens (Human).